We begin with the raw amino-acid sequence, 1987 residues long: Transcription factor 20 (1987 aa).

The span at 1-22 (MQSFREQSSYHGNQQSYPQEVH) shows a compositional bias: polar residues. Disordered regions lie at residues 1–79 (MQSF…QGYQ), 96–432 (DTVA…GNVP), 446–481 (LSPTPSMMPSPNSHAAGFKGFGLEGVPEKRLTDPGL), 502–816 (LLSD…GTAR), and 844–891 (PHWG…SLSE). Positions 51–74 (TGSSSSGRRGTAAAAAAMASETSG) are enriched in low complexity. Residue Arg-59 is modified to Omega-N-methylarginine. The span at 121–142 (QGSSFGNQYASEGHVSQFQAQH) shows a compositional bias: polar residues. Residues 163-205 (SAQYQQQASSQQQQQQQQQQQQQQQQQQQQVQQLRQQLYQSHQ) show a composition bias toward low complexity. The segment covering 206–235 (PLPQTTGQPASGSSHLQPMQRPSTLPSSAG) has biased composition (polar residues). Positions 248–277 (QSSASSSSSSSFPSPQRFSQSGQSYDGSYS) are enriched in low complexity. Positions 289 to 311 (VGSNAQAYGTQSNYSYQPQSMKN) are enriched in polar residues. Lys-316 is covalently cross-linked (Glycyl lysine isopeptide (Lys-Gly) (interchain with G-Cter in SUMO2)). Residues 322–354 (QQGQQQQQQQPQPQQQQPQQQQQQQQQQQHPPQ) show a composition bias toward low complexity. The span at 357 to 377 (MQYTNAATKMPLQSQVGQYNQ) shows a compositional bias: polar residues. The segment covering 396–416 (SNPSPAASVVQSPSCSSTPSP) has biased composition (low complexity). The segment covering 417 to 432 (LMQSGENLQCGQGNVP) has biased composition (polar residues). Residues 446-456 (LSPTPSMMPSP) show a composition bias toward low complexity. Phosphoserine occurs at positions 447 and 458. Composition is skewed to polar residues over residues 526–537 (SCTNSEGSSQPE), 566–576 (LSGQSTSSDTT), and 585–605 (AGSSPTQGAQNEAPRLSTSPA). Phosphoserine occurs at positions 567, 588, 603, and 612. The span at 618 to 627 (TSLSSEGNTK) shows a compositional bias: polar residues. Lys-631 is subject to N6-acetyllysine. The span at 645–657 (RVEKSGGQDKGSQ) shows a compositional bias: basic and acidic residues. The span at 666-682 (RPPSNSGVKEISHTSLP) shows a compositional bias: polar residues. Residue Ser-669 is modified to Phosphoserine. A compositionally biased stretch (low complexity) spans 693-715 (GNKNGDNNSSNHNGEGNGPSSHS). Residues 722 to 731 (TGRTEPSKSP) show a composition bias toward polar residues. Residues Lys-739, Lys-762, Lys-777, Lys-852, Lys-861, and Lys-873 each participate in a glycyl lysine isopeptide (Lys-Gly) (interchain with G-Cter in SUMO2) cross-link. A compositionally biased stretch (basic and acidic residues) spans 761–777 (EKGDFGSHGERKGRNEK). At Ser-900 the chain carries Phosphoserine. Residues Lys-949 and Lys-951 each participate in a glycyl lysine isopeptide (Lys-Gly) (interchain with G-Cter in SUMO2) cross-link. Residues 949–1065 (KLKSQSGQIK…GDPHHMNPHM (117 aa)) form a disordered region. A Glycyl lysine isopeptide (Lys-Gly) (interchain with G-Cter in SUMO1); alternate cross-link involves residue Lys-958. Lys-958 participates in a covalent cross-link: Glycyl lysine isopeptide (Lys-Gly) (interchain with G-Cter in SUMO2); alternate. Residues 974-989 (KSGDHCHPTSIKHETY) show a composition bias toward basic and acidic residues. Lys-985 is covalently cross-linked (Glycyl lysine isopeptide (Lys-Gly) (interchain with G-Cter in SUMO2)). 2 positions are modified to phosphoserine: Ser-994 and Ser-1033. Residue Lys-1043 forms a Glycyl lysine isopeptide (Lys-Gly) (interchain with G-Cter in SUMO2) linkage. Arg-1052 bears the Omega-N-methylarginine mark. A Phosphoserine modification is found at Ser-1081. Glycyl lysine isopeptide (Lys-Gly) (interchain with G-Cter in SUMO2) cross-links involve residues Lys-1114, Lys-1126, Lys-1165, Lys-1201, Lys-1206, Lys-1211, Lys-1238, Lys-1259, Lys-1295, and Lys-1302. The interval 1136–1372 (VIAAAQHRQE…SPAKTKILPP (237 aa)) is disordered. The segment covering 1158 to 1170 (DRVRSPLKNDKDG) has biased composition (basic and acidic residues). The tract at residues 1198-1219 (LPAKSMELKHSSQKLQESCWDL) is leucine-zipper. The Nuclear localization signal signature appears at 1282–1295 (RRRVRSFISPIPSK). Basic and acidic residues-rich tracts occupy residues 1305-1321 (NADDKGRLLHPSKEGAD) and 1332-1346 (HSQDIKSIPKRDSSK). Ser-1333 is modified (phosphoserine). Lys-1337 participates in a covalent cross-link: Glycyl lysine isopeptide (Lys-Gly) (interchain with G-Cter in SUMO2). Ser-1363 is subject to Phosphoserine. A Glycyl lysine isopeptide (Lys-Gly) (interchain with G-Cter in SUMO2) cross-link involves residue Lys-1366. Ser-1389 carries the post-translational modification Phosphoserine. A disordered region spans residues 1415 to 1434 (SLKSGPPEGGTVATQEAEME). Residues Lys-1417, Lys-1437, Lys-1456, and Lys-1474 each participate in a glycyl lysine isopeptide (Lys-Gly) (interchain with G-Cter in SUMO2) cross-link. A disordered region spans residues 1446–1636 (SVTNQESNVE…KQAVPIVEPQ (191 aa)). The segment covering 1463-1479 (EEWRGSGDDKVKTEAHV) has biased composition (basic and acidic residues). The segment covering 1481 to 1501 (TASTGKEPSGTMTSTASQKPG) has biased composition (polar residues). Lys-1538 is covalently cross-linked (Glycyl lysine isopeptide (Lys-Gly) (interchain with G-Cter in SUMO2)). Residue Ser-1550 is modified to Phosphoserine. Residue Lys-1552 forms a Glycyl lysine isopeptide (Lys-Gly) (interchain with G-Cter in SUMO2) linkage. The a.T hook DNA-binding region spans 1565-1579 (GKKKGRPIGSVNKQK). The span at 1584 to 1594 (QPPPPPQPPQM) shows a compositional bias: pro residues. The short motif at 1604-1628 (KPKKQRQRRERRKPGAQPRKRKTKQ) is the Nuclear localization signal element. Basic residues predominate over residues 1606 to 1627 (KKQRQRRERRKPGAQPRKRKTK). Lys-1641 is covalently cross-linked (Glycyl lysine isopeptide (Lys-Gly) (interchain with G-Cter in SUMO2)). Disordered regions lie at residues 1685–1710 (QTKLVRSRKGQRSLTPPPSSTESKVL) and 1760–1865 (TLPK…GPEL). At Ser-1697 the chain carries Phosphoserine. Phosphothreonine is present on residues Thr-1699, Thr-1790, and Thr-1792. Residues 1812 to 1819 (RFKRRHRS) carry the Nuclear localization signal motif. The segment covering 1850 to 1859 (DTKPSVPTTS) has biased composition (polar residues). Residues 1856–1892 (PTTSEGGPELELQIPELPLDSNEFWVHEGCILWANGI) form a C2HC pre-PHD-type; degenerate zinc finger. The segment at 1912-1960 (MKCSHCQEAGATLGCYNKGCSFRYHYPCAIDADCLLHEENFSVRCPKHK) adopts a PHD-type zinc-finger fold. A disordered region spans residues 1966 to 1987 (PLPPLQNKTAKGSLSTEQSERG). The segment covering 1971–1987 (QNKTAKGSLSTEQSERG) has biased composition (polar residues).

In terms of assembly, homodimer. Interacts with RNF4 and JUN. Binds to the regulatory region of MMP3. Expressed in brain, lung, liver, kidney and testes.

The protein resides in the nucleus. Its function is as follows. Transcriptional activator that binds to the regulatory region of MMP3 and thereby controls stromelysin expression. It stimulates the activity of various transcriptional activators such as JUN, SP1, PAX6 and ETS1, suggesting a function as a coactivator. In Mus musculus (Mouse), this protein is Transcription factor 20 (Tcf20).